The sequence spans 802 residues: Phenylalanine--tRNA ligase beta subunit (802 aa).

One can recognise a tRNA-binding domain in the interval Arg40–Arg149. The B5 domain occupies His407–Val484. Residues Asp462, Asp468, Glu471, and Glu472 each coordinate Mg(2+). The 93-residue stretch at Ser710–Arg802 folds into the FDX-ACB domain.

It belongs to the phenylalanyl-tRNA synthetase beta subunit family. Type 1 subfamily. In terms of assembly, tetramer of two alpha and two beta subunits. Requires Mg(2+) as cofactor.

It is found in the cytoplasm. It carries out the reaction tRNA(Phe) + L-phenylalanine + ATP = L-phenylalanyl-tRNA(Phe) + AMP + diphosphate + H(+). The polypeptide is Phenylalanine--tRNA ligase beta subunit (Leptospira borgpetersenii serovar Hardjo-bovis (strain L550)).